Here is a 506-residue protein sequence, read N- to C-terminus: NAD(P)H-quinone oxidoreductase subunit 2 (506 aa).

13 helical membrane-spanning segments follow: residues 14 to 34 (AIIPEAFILLGIVGTLLVDLA), 42 to 62 (WAPIICYLSIGSSLLSLALQW), 79 to 99 (LAISFRAIISLSTLVSLLISW), 108 to 128 (PIGEFAAIVLSATLGAMLLCG), 132 to 152 (LISVFISLETLSVASYLLSGY), 167 to 187 (LLVGSAAAAVYLYGSSFLYGL), 206 to 226 (FITSLALVFVLSTVAFKIAAV), 240 to 260 (PTPVVAFLSVGSKTAGFAFAI), 276 to 296 (LLFTILAILSMALGNVVALAQ), 302 to 322 (MLAYSSIGQAGFVMIGIVSGT), 330 to 350 (VLYLAAYLFMNLGAFSCVILF), 374 to 394 (LGLSLCLLSLGGLPPMLGFFG), and 409 to 429 (LLVIVGLVTSVISIYYYISVI).

It belongs to the complex I subunit 2 family. As to quaternary structure, NDH-1 can be composed of about 15 different subunits; different subcomplexes with different compositions have been identified which probably have different functions.

The protein resides in the cellular thylakoid membrane. The enzyme catalyses a plastoquinone + NADH + (n+1) H(+)(in) = a plastoquinol + NAD(+) + n H(+)(out). It catalyses the reaction a plastoquinone + NADPH + (n+1) H(+)(in) = a plastoquinol + NADP(+) + n H(+)(out). NDH-1 shuttles electrons from an unknown electron donor, via FMN and iron-sulfur (Fe-S) centers, to quinones in the respiratory and/or the photosynthetic chain. The immediate electron acceptor for the enzyme in this species is believed to be plastoquinone. Couples the redox reaction to proton translocation, and thus conserves the redox energy in a proton gradient. Cyanobacterial NDH-1 also plays a role in inorganic carbon-concentration. This is NAD(P)H-quinone oxidoreductase subunit 2 from Prochlorococcus marinus (strain MIT 9215).